A 289-amino-acid chain; its full sequence is Acetyl-coenzyme A carboxylase carboxyl transferase subunit beta (289 aa).

In terms of domain architecture, CoA carboxyltransferase N-terminal spans 28-289; the sequence is VMTKCPKCKK…QGEGMAVWQN (262 aa). Positions 32, 35, 51, and 54 each coordinate Zn(2+). A C4-type zinc finger spans residues 32 to 54; the sequence is CPKCKKIMYTKELLKNLKVCVNC.

This sequence belongs to the AccD/PCCB family. As to quaternary structure, acetyl-CoA carboxylase is a heterohexamer composed of biotin carboxyl carrier protein (AccB), biotin carboxylase (AccC) and two subunits each of ACCase subunit alpha (AccA) and ACCase subunit beta (AccD). The cofactor is Zn(2+).

It localises to the cytoplasm. The enzyme catalyses N(6)-carboxybiotinyl-L-lysyl-[protein] + acetyl-CoA = N(6)-biotinyl-L-lysyl-[protein] + malonyl-CoA. It participates in lipid metabolism; malonyl-CoA biosynthesis; malonyl-CoA from acetyl-CoA: step 1/1. Its function is as follows. Component of the acetyl coenzyme A carboxylase (ACC) complex. Biotin carboxylase (BC) catalyzes the carboxylation of biotin on its carrier protein (BCCP) and then the CO(2) group is transferred by the transcarboxylase to acetyl-CoA to form malonyl-CoA. The sequence is that of Acetyl-coenzyme A carboxylase carboxyl transferase subunit beta from Bacillus cytotoxicus (strain DSM 22905 / CIP 110041 / 391-98 / NVH 391-98).